Consider the following 155-residue polypeptide: 2-C-methyl-D-erythritol 2,4-cyclodiphosphate synthase (155 aa).

Positions 8 and 10 each coordinate a divalent metal cation. 4-CDP-2-C-methyl-D-erythritol 2-phosphate is bound by residues 8–10 (DVH) and 34–35 (HS). Residue His42 participates in a divalent metal cation binding. Residues 56-58 (DIG), 61-65 (FPDSD), 100-106 (AQKPKML), 132-135 (TTEE), Phe139, and Lys142 each bind 4-CDP-2-C-methyl-D-erythritol 2-phosphate.

This sequence belongs to the IspF family. As to quaternary structure, homotrimer. A divalent metal cation is required as a cofactor.

The catalysed reaction is 4-CDP-2-C-methyl-D-erythritol 2-phosphate = 2-C-methyl-D-erythritol 2,4-cyclic diphosphate + CMP. It participates in isoprenoid biosynthesis; isopentenyl diphosphate biosynthesis via DXP pathway; isopentenyl diphosphate from 1-deoxy-D-xylulose 5-phosphate: step 4/6. In terms of biological role, involved in the biosynthesis of isopentenyl diphosphate (IPP) and dimethylallyl diphosphate (DMAPP), two major building blocks of isoprenoid compounds. Catalyzes the conversion of 4-diphosphocytidyl-2-C-methyl-D-erythritol 2-phosphate (CDP-ME2P) to 2-C-methyl-D-erythritol 2,4-cyclodiphosphate (ME-CPP) with a corresponding release of cytidine 5-monophosphate (CMP). This is 2-C-methyl-D-erythritol 2,4-cyclodiphosphate synthase from Clostridium botulinum (strain Kyoto / Type A2).